A 315-amino-acid chain; its full sequence is Ribosomal protein L11 methyltransferase (315 aa).

4 residues coordinate S-adenosyl-L-methionine: Thr164, Gly185, Asp207, and Asn250.

The protein belongs to the methyltransferase superfamily. PrmA family.

The protein resides in the cytoplasm. The catalysed reaction is L-lysyl-[protein] + 3 S-adenosyl-L-methionine = N(6),N(6),N(6)-trimethyl-L-lysyl-[protein] + 3 S-adenosyl-L-homocysteine + 3 H(+). Methylates ribosomal protein L11. This chain is Ribosomal protein L11 methyltransferase, found in Exiguobacterium sibiricum (strain DSM 17290 / CCUG 55495 / CIP 109462 / JCM 13490 / 255-15).